The primary structure comprises 149 residues: GATA transcription factor 15 (149 aa).

Over residues 1–10 (MLDPTEKVID) the composition is skewed to basic and acidic residues. Disordered stretches follow at residues 1–41 (MLDP…NEKK) and 76–102 (RRTL…GDSL). The segment at 37–91 (SNEKKSCAICGTSKTPLWRGGPAGPKSLCNACGIRNRKKRRTLISNRSEDKKKKS) adopts a GATA-type zinc-finger fold.

The protein belongs to the type IV zinc-finger family. Class B subfamily.

The protein localises to the nucleus. Its function is as follows. Transcriptional regulator that specifically binds 5'-GATA-3' or 5'-GAT-3' motifs within gene promoters. The protein is GATA transcription factor 15 (GATA15) of Arabidopsis thaliana (Mouse-ear cress).